Reading from the N-terminus, the 144-residue chain is Probable disulfide formation protein (144 aa).

Residues 10–29 (WNLLLLTWLVALISTLSALF) form a helical membrane-spanning segment. A disulfide bridge connects residues Cys39 and Cys42. A run of 2 helical transmembrane segments spans residues 44–63 (FQRA…CYRS) and 70–87 (YALP…VHTL). An intrachain disulfide couples Cys100 to Cys107. A helical membrane pass occupies residues 116-138 (GVVPLPALALFAFIIIAILLIII).

It belongs to the DsbB family. BdbC subfamily.

It is found in the cell inner membrane. Functionally, required for disulfide bond formation in some proteins. The protein is Probable disulfide formation protein of Metapseudomonas resinovorans (Pseudomonas resinovorans).